Here is a 207-residue protein sequence, read N- to C-terminus: Large ribosomal subunit protein uL4 (207 aa).

The segment at 49 to 78 (HAVKNRSAVSGGGRKPWRQKGTGRARQGSI) is disordered.

The protein belongs to the universal ribosomal protein uL4 family. In terms of assembly, part of the 50S ribosomal subunit.

One of the primary rRNA binding proteins, this protein initially binds near the 5'-end of the 23S rRNA. It is important during the early stages of 50S assembly. It makes multiple contacts with different domains of the 23S rRNA in the assembled 50S subunit and ribosome. Functionally, forms part of the polypeptide exit tunnel. This chain is Large ribosomal subunit protein uL4, found in Streptococcus gordonii (strain Challis / ATCC 35105 / BCRC 15272 / CH1 / DL1 / V288).